The primary structure comprises 233 residues: Putative N-acetylmannosamine-6-phosphate 2-epimerase (233 aa).

It belongs to the NanE family.

It carries out the reaction an N-acyl-D-glucosamine 6-phosphate = an N-acyl-D-mannosamine 6-phosphate. It participates in amino-sugar metabolism; N-acetylneuraminate degradation; D-fructose 6-phosphate from N-acetylneuraminate: step 3/5. Its function is as follows. Converts N-acetylmannosamine-6-phosphate (ManNAc-6-P) to N-acetylglucosamine-6-phosphate (GlcNAc-6-P). The protein is Putative N-acetylmannosamine-6-phosphate 2-epimerase of Yersinia pseudotuberculosis serotype O:3 (strain YPIII).